A 326-amino-acid chain; its full sequence is Phosphate acyltransferase (326 aa).

Belongs to the PlsX family. Homodimer. Probably interacts with PlsY.

It localises to the cytoplasm. The enzyme catalyses a fatty acyl-[ACP] + phosphate = an acyl phosphate + holo-[ACP]. The protein operates within lipid metabolism; phospholipid metabolism. In terms of biological role, catalyzes the reversible formation of acyl-phosphate (acyl-PO(4)) from acyl-[acyl-carrier-protein] (acyl-ACP). This enzyme utilizes acyl-ACP as fatty acyl donor, but not acyl-CoA. The chain is Phosphate acyltransferase from Petrotoga mobilis (strain DSM 10674 / SJ95).